We begin with the raw amino-acid sequence, 22 residues long: Defensin D1 (22 aa).

Belongs to the DEFL family. Group II subfamily.

Antimicrobial peptide. Active against Gram-positive and Gram-negative bacterial pathogens. This is Defensin D1 from Spinacia oleracea (Spinach).